We begin with the raw amino-acid sequence, 571 residues long: Sulfite reductase [NADPH] hemoprotein beta-component (571 aa).

Residues Cys436, Cys442, Cys481, and Cys485 each contribute to the [4Fe-4S] cluster site. Cys485 is a binding site for siroheme.

The protein belongs to the nitrite and sulfite reductase 4Fe-4S domain family. In terms of assembly, alpha(8)-beta(8). The alpha component is a flavoprotein, the beta component is a hemoprotein. Siroheme is required as a cofactor. [4Fe-4S] cluster serves as cofactor.

It catalyses the reaction hydrogen sulfide + 3 NADP(+) + 3 H2O = sulfite + 3 NADPH + 4 H(+). It functions in the pathway sulfur metabolism; hydrogen sulfide biosynthesis; hydrogen sulfide from sulfite (NADPH route): step 1/1. Its function is as follows. Component of the sulfite reductase complex that catalyzes the 6-electron reduction of sulfite to sulfide. This is one of several activities required for the biosynthesis of L-cysteine from sulfate. The chain is Sulfite reductase [NADPH] hemoprotein beta-component from Anoxybacillus flavithermus (strain DSM 21510 / WK1).